A 368-amino-acid chain; its full sequence is tRNA-specific 2-thiouridylase MnmA (368 aa).

Residues 11–18 (GMSGGVDS) and Met37 contribute to the ATP site. The tract at residues 97 to 99 (NPD) is interaction with target base in tRNA. Cys102 acts as the Nucleophile in catalysis. An intrachain disulfide couples Cys102 to Cys199. Gly127 serves as a coordination point for ATP. The interaction with tRNA stretch occupies residues 149–151 (KDQ). Cys199 serves as the catalytic Cysteine persulfide intermediate. The tract at residues 311–312 (RY) is interaction with tRNA.

It belongs to the MnmA/TRMU family. Interacts with TusE.

It localises to the cytoplasm. It catalyses the reaction S-sulfanyl-L-cysteinyl-[protein] + uridine(34) in tRNA + AH2 + ATP = 2-thiouridine(34) in tRNA + L-cysteinyl-[protein] + A + AMP + diphosphate + H(+). Catalyzes the 2-thiolation of uridine at the wobble position (U34) of tRNA(Lys), tRNA(Glu) and tRNA(Gln), leading to the formation of s(2)U34, the first step of tRNA-mnm(5)s(2)U34 synthesis. Sulfur is provided by IscS, via a sulfur-relay system. Binds ATP and its substrate tRNAs. The sequence is that of tRNA-specific 2-thiouridylase MnmA from Salmonella arizonae (strain ATCC BAA-731 / CDC346-86 / RSK2980).